We begin with the raw amino-acid sequence, 446 residues long: Serum factor response D (446 aa).

An MADS-box domain is found at methionine 1–tyrosine 61. Disordered stretches follow at residues lysine 95 to serine 195, threonine 210 to valine 296, and cysteine 319 to asparagine 432. Basic and acidic residues predominate over residues serine 112–serine 121. The span at histidine 133–glutamine 142 shows a compositional bias: basic residues. Composition is skewed to low complexity over residues tyrosine 143–serine 195 and histidine 216–asparagine 282. The segment covering proline 322 to lysine 355 has biased composition (polar residues). A compositionally biased stretch (low complexity) spans asparagine 365 to asparagine 432.

The protein resides in the nucleus. The protein is Serum factor response D (srfD) of Dictyostelium discoideum (Social amoeba).